A 767-amino-acid chain; its full sequence is Protein hunchback (767 aa).

Disordered regions lie at residues 30–51, 105–127, and 174–212; these read EPGH…PIPS, QQQY…HLMG, and EKLQ…SNSS. Residues 39–51 are compositionally biased toward polar residues; sequence SVASSPRQSPIPS. Residues 105 to 117 are compositionally biased toward low complexity; it reads QQQYQQHFQAAQQ. Over residues 200-212 the composition is skewed to basic and acidic residues; that stretch reads EPEKEHDQMSNSS. C2H2-type zinc fingers lie at residues 242–264, 271–293, 299–321, and 327–351; these read YKCK…TRTH, LQCP…IRKH, FQCD…RKSH, and YRCA…KYGH. Disordered regions lie at residues 357–424, 518–570, and 610–704; these read LDED…TSQL, QLQQ…QPQQ, and GVMT…APPS. The segment covering 386–397 has biased composition (gly residues); the sequence is IASGGSGSGSGS. The span at 518-527 shows a compositional bias: low complexity; sequence QLQQQNQQQS. Over residues 528–537 the composition is skewed to acidic residues; it reads DNEEEEQDDE. The segment covering 661-704 has biased composition (low complexity); sequence ANTSASSTASSSGNSSNASSNSNGNSSSNSSSSGTNSAAAAPPS. 2 C2H2-type zinc fingers span residues 714-736 and 742-766; these read YECK…MGYH and FKCN…RNAH.

Belongs to the hunchback C2H2-type zinc-finger protein family.

It localises to the nucleus. In terms of biological role, gap class segmentation protein that controls development of head structures. This is Protein hunchback (hb) from Drosophila orena (Fruit fly).